The following is a 141-amino-acid chain: Putative pre-16S rRNA nuclease (141 aa).

It belongs to the YqgF nuclease family.

The protein resides in the cytoplasm. In terms of biological role, could be a nuclease involved in processing of the 5'-end of pre-16S rRNA. The polypeptide is Putative pre-16S rRNA nuclease (Syntrophomonas wolfei subsp. wolfei (strain DSM 2245B / Goettingen)).